The chain runs to 893 residues: MAVARSSRSAAATPRSGAEIRAAFLSFYEERGHKVMASASLIPEDPTVLLTIAGMLPFKPVFLGQQKRPAPRATSSQKCIRTNDIENVGRTARHHTFFEMLGNFSFGDYFKQQAIEWAWELSTDLFGIDPKHLVVSVFREDDEAEQIWRDVVGVNPKRIIRMDEADNFWASGPTGPCGPCSEIYYDFNPELGDEGIDLEDDDRFIEFYNLVFMQYNRDAEGTLTPLANRNIDTGLGLERMAQILQKVPNNYETDLIFPLIQAAADLAGVDYHQLDDAGQTSLKVIGDHSRAVTQLICDGVSASNLGRGYILRRLLRRVVRHGRLLGIHQPFLVTMGQASIALLKDAYPSVIERQEVILAELQREESRFLETLERGEKLLADVLESKPKQISGAQAFELYDTYGFPLELTQEIAEEHGLDVDLAGFEQAMEQQRQRAKAAAVSIDLTLQDAIDQVAADLNATSFEGYDLLVQSSSTVQALLVNGEAAASASDGDVVQVVLDNTPFYGEGGGQVGDRGLLVGDGPDGNGLIVVIEGVSRNRGVFVHSGRVQLGRLGVGDVVHGQVDRACRRRAQANHTATHLLQAALKQVVDEGIGQAGSLVNFERLRFDFHCPRAVKPEELEQIETLINGWISDAQSLEVNEMAIDQAKAAGAVAMFGEKYADVVRVVDVPGVSMELCGGTHVGNTAEIGLFKIVSESGVAAGIRRIEAVAGASVLAYLNEREVVVKQLGDRFKAQPGEIVERVVALQEELKNSQKALTAARSELAVAKSAALAVQAVAVGKHQLLVARLDGVNGDGLQGAALGLLDQLGDATAVVLGGLPDPSDQGKVILVAAFGKAVIATGQQAGKFIGAIAKLCGGGGGGRPNLAQAGGRDGAALDAALNTARAELKKTLG.

Zn(2+) contacts are provided by His-575, His-579, Cys-677, and His-681.

Belongs to the class-II aminoacyl-tRNA synthetase family. Zn(2+) serves as cofactor.

The protein localises to the cytoplasm. It carries out the reaction tRNA(Ala) + L-alanine + ATP = L-alanyl-tRNA(Ala) + AMP + diphosphate. In terms of biological role, catalyzes the attachment of alanine to tRNA(Ala) in a two-step reaction: alanine is first activated by ATP to form Ala-AMP and then transferred to the acceptor end of tRNA(Ala). Also edits incorrectly charged Ser-tRNA(Ala) and Gly-tRNA(Ala) via its editing domain. This chain is Alanine--tRNA ligase, found in Synechococcus sp. (strain CC9311).